The primary structure comprises 164 residues: Outer membrane protein assembly factor BamE (164 aa).

An N-terminal signal peptide occupies residues 1–19 (MHAFFPRLLLLLLFLPLTH). The tract at residues 111–164 (PAFSESEPAQNFFSPEQTFTPAPDTDSNMNEEPDKKGTVNFLKENQTNFYKDNQ) is disordered. 2 stretches are compositionally biased toward polar residues: residues 117 to 140 (EPAQ…SNMN) and 153 to 164 (KENQTNFYKDNQ).

It belongs to the BamE family. Part of the Bam complex.

It localises to the cell outer membrane. Part of the outer membrane protein assembly complex, which is involved in assembly and insertion of beta-barrel proteins into the outer membrane. The sequence is that of Outer membrane protein assembly factor BamE from Nitrosomonas europaea (strain ATCC 19718 / CIP 103999 / KCTC 2705 / NBRC 14298).